The sequence spans 151 residues: Acidic phospholipase A2 1 (151 aa).

The signal sequence occupies residues 1-27 (MYPAHLLVLLAVCVSLLGAASIPARPL). 7 disulfides stabilise this stretch: cysteine 38-cysteine 104, cysteine 54-cysteine 151, cysteine 56-cysteine 72, cysteine 71-cysteine 132, cysteine 78-cysteine 125, cysteine 88-cysteine 118, and cysteine 111-cysteine 123. The Ca(2+) site is built by tyrosine 55, glycine 57, and glycine 59. Histidine 75 is an active-site residue. Aspartate 76 serves as a coordination point for Ca(2+). Aspartate 126 is an active-site residue.

This sequence belongs to the phospholipase A2 family. Group I subfamily. D49 sub-subfamily. Ca(2+) serves as cofactor. In terms of tissue distribution, expressed by the venom gland.

Its subcellular location is the secreted. It carries out the reaction a 1,2-diacyl-sn-glycero-3-phosphocholine + H2O = a 1-acyl-sn-glycero-3-phosphocholine + a fatty acid + H(+). PLA2 catalyzes the calcium-dependent hydrolysis of the 2-acyl groups in 3-sn-phosphoglycerides. This Tropidechis carinatus (Australian rough-scaled snake) protein is Acidic phospholipase A2 1.